A 197-amino-acid polypeptide reads, in one-letter code: dITP/XTP pyrophosphatase (197 aa).

8–13 (TGNAGK) lines the substrate pocket. Glu40 and Asp69 together coordinate Mg(2+). Residue Asp69 is the Proton acceptor of the active site. Residues Ser70, 154–157 (FGYD), Lys177, and 182–183 (HR) each bind substrate.

The protein belongs to the HAM1 NTPase family. As to quaternary structure, homodimer. The cofactor is Mg(2+).

It catalyses the reaction XTP + H2O = XMP + diphosphate + H(+). It carries out the reaction dITP + H2O = dIMP + diphosphate + H(+). The catalysed reaction is ITP + H2O = IMP + diphosphate + H(+). In terms of biological role, pyrophosphatase that catalyzes the hydrolysis of nucleoside triphosphates to their monophosphate derivatives, with a high preference for the non-canonical purine nucleotides XTP (xanthosine triphosphate), dITP (deoxyinosine triphosphate) and ITP. Seems to function as a house-cleaning enzyme that removes non-canonical purine nucleotides from the nucleotide pool, thus preventing their incorporation into DNA/RNA and avoiding chromosomal lesions. This is dITP/XTP pyrophosphatase (rdgB) from Escherichia coli O157:H7.